A 391-amino-acid chain; its full sequence is MVKYMVLKIKDNIYCMSFIEWKIKEYRGLDIEKGTTYNSYLILDKNNVIIDTTRIKYFDELLSYLKDVANLKLDYIISNHISPDHNECIEKLIELTEAKIVTTKIRKYYLDAQFNTKDWEFVIVKNGDELNIGNRTLKFITDDKCEYMLTYCVEDKILFSNDLFSQHVVYKEKIDSDIGHKIMLDAKEYFANILLPYRKSILKILNILKDLDLEYICPSHGVIWHIMIDEILTKYRMWCSDSYKNTAVIVYATIYSSTEKIAKALGEGLSEEGVDVIYHRLDTSPLNIIMRDILDAKYVLVGSPTINMNVHPKVGMLLTYIEGLKPSNKKIGVAFGSYGWKECATKKIIEAFKRLGFKIVDDKILTFRFAPKENDIKKIKEFGRKLAKINV.

The region spanning 247 to 387 (AVIVYATIYS…KIKEFGRKLA (141 aa)) is the Flavodoxin-like domain.

This is an uncharacterized protein from Methanocaldococcus jannaschii (strain ATCC 43067 / DSM 2661 / JAL-1 / JCM 10045 / NBRC 100440) (Methanococcus jannaschii).